The sequence spans 513 residues: Serine/threonine-protein kinase UL13 homolog (513 aa).

Positions 1–27 are disordered; it reads MDTESKNKKTTNGGENSNCSHSTRTPD. Residues 10–23 are compositionally biased toward polar residues; that stretch reads TTNGGENSNCSHST. A Protein kinase domain is found at 145-487; it reads KEMPIYAGSG…FDSLNIFPYL (343 aa). Residues 151 to 159 and Lys-170 each bind ATP; that span reads AGSGSYGVV. Asp-268 functions as the Proton acceptor in the catalytic mechanism.

The protein belongs to the protein kinase superfamily. Ser/Thr protein kinase family. Post-translationally, autophosphorylated.

The protein localises to the virion tegument. Its subcellular location is the host nucleus. The enzyme catalyses L-seryl-[protein] + ATP = O-phospho-L-seryl-[protein] + ADP + H(+). The catalysed reaction is L-threonyl-[protein] + ATP = O-phospho-L-threonyl-[protein] + ADP + H(+). In terms of biological role, multifunctional serine/threonine kinase that plays a role in several processes including egress of virus particles from the nucleus, modulation of the actin cytoskeleton and regulation of viral and cellular gene expression. The protein is Serine/threonine-protein kinase UL13 homolog (MDV025) of Gallid herpesvirus 2 (strain Chicken/Md5/ATCC VR-987) (GaHV-2).